Reading from the N-terminus, the 79-residue chain is Crassicorin-I (79 aa).

The signal sequence occupies residues 1 to 19 (MKLFLVSIVLVGMLVLAAA). A propeptide spanning residues 20–39 (RPERDIDSFDEQEEKGFVKR) is cleaved from the precursor. 3 disulfides stabilise this stretch: C43-C76, C45-C69, and C59-C77.

This sequence belongs to the sea anemone type 3 (BDS) potassium channel toxin family. As to expression, highly expressed by the mesenteries. Moderately expressed by the pharynx. Weakly expressed by the gonad and pedal disk. No expression in tentacle.

Its subcellular location is the secreted. The protein resides in the nematocyst. Its function is as follows. Peptide with both antimicrobial and neurotoxin activities. Cationic AMP with antibacterial activity against both Gram-positive bacteria (B.subtilis, MIC=11.49 ug/mL) and Gram-negative bacteria (E.coli (MIC=12.21 ug/mL) and S.enterica (MIC=11.95 ug/mL)). Shows no significant antimicrobial activity against bacteria S.aureus and P.aeruginosa, as well as the fungus C.albicans. In vivo, induces reversible paralytic activity towards the shrimp P.paucidens. May act by impairing sodium or potassium channels in the prey. This chain is Crassicorin-I, found in Urticina crassicornis (Mottled anemone).